Here is a 735-residue protein sequence, read N- to C-terminus: Ribosomal RNA large subunit methyltransferase K/L (735 aa).

In terms of domain architecture, THUMP spans 45–156 (DGYRACLWSR…RDSLSFSLDL (112 aa)).

This sequence belongs to the methyltransferase superfamily. RlmKL family.

It localises to the cytoplasm. The enzyme catalyses guanosine(2445) in 23S rRNA + S-adenosyl-L-methionine = N(2)-methylguanosine(2445) in 23S rRNA + S-adenosyl-L-homocysteine + H(+). It catalyses the reaction guanosine(2069) in 23S rRNA + S-adenosyl-L-methionine = N(2)-methylguanosine(2069) in 23S rRNA + S-adenosyl-L-homocysteine + H(+). In terms of biological role, specifically methylates the guanine in position 2445 (m2G2445) and the guanine in position 2069 (m7G2069) of 23S rRNA. The protein is Ribosomal RNA large subunit methyltransferase K/L of Allochromatium vinosum (strain ATCC 17899 / DSM 180 / NBRC 103801 / NCIMB 10441 / D) (Chromatium vinosum).